A 120-amino-acid chain; its full sequence is MKKLTKTHSHRQQKLASIINEALIEILRRGKMLDSRLFDCPLTITKVIVTTDLKIANCYFLPFNTKLTIDEIMDALNNSKNAIRNFITNKIHMKFSPDIRFHYDHGFDNAIKVAHLLKDL.

This sequence belongs to the RbfA family. As to quaternary structure, monomer. Binds 30S ribosomal subunits, but not 50S ribosomal subunits or 70S ribosomes.

The protein resides in the cytoplasm. Its function is as follows. One of several proteins that assist in the late maturation steps of the functional core of the 30S ribosomal subunit. Associates with free 30S ribosomal subunits (but not with 30S subunits that are part of 70S ribosomes or polysomes). Required for efficient processing of 16S rRNA. May interact with the 5'-terminal helix region of 16S rRNA. The protein is Ribosome-binding factor A of Rickettsia rickettsii (strain Iowa).